Consider the following 465-residue polypeptide: Argininosuccinate lyase (465 aa).

This sequence belongs to the lyase 1 family. Argininosuccinate lyase subfamily.

It is found in the cytoplasm. It catalyses the reaction 2-(N(omega)-L-arginino)succinate = fumarate + L-arginine. It participates in amino-acid biosynthesis; L-arginine biosynthesis; L-arginine from L-ornithine and carbamoyl phosphate: step 3/3. This Desulfatibacillum aliphaticivorans protein is Argininosuccinate lyase.